The sequence spans 351 residues: Autoinducer 2 import system permease protein LsrC (351 aa).

The next 9 helical transmembrane spans lie at 14 to 34 (LLAI…YFSL), 39 to 59 (MIFS…LVML), 70 to 90 (ITGL…GLAA), 93 to 113 (LFAL…VTWL), 115 to 135 (IPAI…MLLL), 155 to 175 (ILFS…AMAW), 213 to 233 (MNGV…GFIP), 252 to 272 (GISL…AFLL), and 284 to 304 (LPAW…LVFD).

Belongs to the binding-protein-dependent transport system permease family. AraH/RbsC subfamily. As to quaternary structure, the complex is composed of two ATP-binding proteins (LsrA), two transmembrane proteins (LsrC and LsrD) and a solute-binding protein (LsrB).

The protein localises to the cell inner membrane. In terms of biological role, part of the ABC transporter complex LsrABCD involved in autoinducer 2 (AI-2) import. Probably responsible for the translocation of the substrate across the membrane. This is Autoinducer 2 import system permease protein LsrC (lsrC) from Yersinia pestis bv. Antiqua (strain Antiqua).